A 122-amino-acid polypeptide reads, in one-letter code: Small ribosomal subunit protein uS13 (122 aa).

The tract at residues 92–122 (HRNGLPVRGQRTHTNARTRKGKAKPIAGKKK) is disordered. Basic residues predominate over residues 101 to 122 (QRTHTNARTRKGKAKPIAGKKK).

This sequence belongs to the universal ribosomal protein uS13 family. In terms of assembly, part of the 30S ribosomal subunit. Forms a loose heterodimer with protein S19. Forms two bridges to the 50S subunit in the 70S ribosome.

Located at the top of the head of the 30S subunit, it contacts several helices of the 16S rRNA. In the 70S ribosome it contacts the 23S rRNA (bridge B1a) and protein L5 of the 50S subunit (bridge B1b), connecting the 2 subunits; these bridges are implicated in subunit movement. Contacts the tRNAs in the A and P-sites. The chain is Small ribosomal subunit protein uS13 from Erythrobacter litoralis (strain HTCC2594).